A 108-amino-acid polypeptide reads, in one-letter code: Translation initiation factor 1A (108 aa).

The 75-residue stretch at 11–85 (PSKDVPKPEE…TKADIVYRYM (75 aa)) folds into the S1-like domain.

Belongs to the eIF-1A family.

Its function is as follows. Seems to be required for maximal rate of protein biosynthesis. Enhances ribosome dissociation into subunits and stabilizes the binding of the initiator Met-tRNA(I) to 40 S ribosomal subunits. In Metallosphaera sedula (strain ATCC 51363 / DSM 5348 / JCM 9185 / NBRC 15509 / TH2), this protein is Translation initiation factor 1A (eIF1A).